The chain runs to 340 residues: Ketol-acid reductoisomerase (NADP(+)) (340 aa).

The KARI N-terminal Rossmann domain occupies 1 to 182 (MRVYYDRDCD…GGGRSGIIET (182 aa)). Residues 24–27 (YGSQ), R48, S51, S53, and 83–86 (DELQ) contribute to the NADP(+) site. H108 is an active-site residue. Position 134 (G134) interacts with NADP(+). A KARI C-terminal knotted domain is found at 183-329 (NFRQECETDL…EKLRGMMPWI (147 aa)). D191, E195, E227, and E231 together coordinate Mg(2+). S252 is a substrate binding site.

This sequence belongs to the ketol-acid reductoisomerase family. Mg(2+) is required as a cofactor.

The enzyme catalyses (2R)-2,3-dihydroxy-3-methylbutanoate + NADP(+) = (2S)-2-acetolactate + NADPH + H(+). It catalyses the reaction (2R,3R)-2,3-dihydroxy-3-methylpentanoate + NADP(+) = (S)-2-ethyl-2-hydroxy-3-oxobutanoate + NADPH + H(+). It participates in amino-acid biosynthesis; L-isoleucine biosynthesis; L-isoleucine from 2-oxobutanoate: step 2/4. The protein operates within amino-acid biosynthesis; L-valine biosynthesis; L-valine from pyruvate: step 2/4. Its function is as follows. Involved in the biosynthesis of branched-chain amino acids (BCAA). Catalyzes an alkyl-migration followed by a ketol-acid reduction of (S)-2-acetolactate (S2AL) to yield (R)-2,3-dihydroxy-isovalerate. In the isomerase reaction, S2AL is rearranged via a Mg-dependent methyl migration to produce 3-hydroxy-3-methyl-2-ketobutyrate (HMKB). In the reductase reaction, this 2-ketoacid undergoes a metal-dependent reduction by NADPH to yield (R)-2,3-dihydroxy-isovalerate. In Cereibacter sphaeroides (strain ATCC 17023 / DSM 158 / JCM 6121 / CCUG 31486 / LMG 2827 / NBRC 12203 / NCIMB 8253 / ATH 2.4.1.) (Rhodobacter sphaeroides), this protein is Ketol-acid reductoisomerase (NADP(+)).